A 137-amino-acid chain; its full sequence is Small ribosomal subunit protein uS12 (137 aa).

Disordered regions lie at residues 1–21 and 34–57; these read MPTI…KSDS and VHTK…TPKK. Residue Asp-102 is modified to 3-methylthioaspartic acid.

This sequence belongs to the universal ribosomal protein uS12 family. As to quaternary structure, part of the 30S ribosomal subunit. Contacts proteins S8 and S17. May interact with IF1 in the 30S initiation complex.

In terms of biological role, with S4 and S5 plays an important role in translational accuracy. Interacts with and stabilizes bases of the 16S rRNA that are involved in tRNA selection in the A site and with the mRNA backbone. Located at the interface of the 30S and 50S subunits, it traverses the body of the 30S subunit contacting proteins on the other side and probably holding the rRNA structure together. The combined cluster of proteins S8, S12 and S17 appears to hold together the shoulder and platform of the 30S subunit. The protein is Small ribosomal subunit protein uS12 of Streptococcus equi subsp. zooepidemicus (strain H70).